The following is a 648-amino-acid chain: Actin-related protein 5 (648 aa).

The tract at residues 34 to 59 is disordered; sequence LTKPRKDRKKEAAASEGSASQTTVEQ. Coiled-coil stretches lie at residues 277–311 and 340–364; these read TAEQKQEKRRELAHRLLDIKKNREQEKLREDEQQL and TLEDLDSLIATINSRIKRAQERAQS. Disordered regions lie at residues 357 to 385 and 403 to 455; these read RAQERAQSGPRPSKQQERLNKMPKPPEGM and GRKQ…GMND. Positions 414–428 are enriched in basic and acidic residues; sequence EQAKRHTHAAQERMR. A phosphoserine mark is found at serine 471 and serine 473.

This sequence belongs to the actin family. ARP5 subfamily. As to quaternary structure, component of the chromatin remodeling Ino80 complex.

Its subcellular location is the nucleus. Functionally, proposed core component of the chromatin remodeling Ino80 complex which is involved in transcriptional regulation, DNA replication and probably DNA repair. This chain is Actin-related protein 5, found in Drosophila melanogaster (Fruit fly).